The sequence spans 342 residues: Heat-inducible transcription repressor HrcA (342 aa).

This sequence belongs to the HrcA family.

In terms of biological role, negative regulator of class I heat shock genes (grpE-dnaK-dnaJ and groELS operons). Prevents heat-shock induction of these operons. This chain is Heat-inducible transcription repressor HrcA, found in Methylibium petroleiphilum (strain ATCC BAA-1232 / LMG 22953 / PM1).